The primary structure comprises 60 residues: Probable tautomerase SP_1017 (60 aa).

Catalysis depends on Pro-2, which acts as the Proton acceptor; via imino nitrogen.

This sequence belongs to the 4-oxalocrotonate tautomerase family.

This is Probable tautomerase SP_1017 from Streptococcus pneumoniae serotype 4 (strain ATCC BAA-334 / TIGR4).